A 305-amino-acid polypeptide reads, in one-letter code: MSSNQIALKNLVSMETLSNEEVMALIKRGIEFKNGAKVHYDEQHIVSNLFFEPSTRTHKAFEVAELKLGCDLLDFDVKTSSVNKGETLYDTILTMSALGVDVCVIRHPEVDYYKELVESPTITTSIVNGGDGSGQHPSQSLLDLMTIYQEFGRFEGLKVAIAGDLDHSRVAKSNMQILKRLGAELYFAGPEEWRSQEFADYGKFVTIDEVIEEVDVMMFLRVQHERHDYESIFSKENYHRLHGLTQERYDRMKDTAILMHPAPVNRDVEIADHLVEAPKSRIVEQMTNGVFVRMAIIEAVLKGRQ.

2 residues coordinate carbamoyl phosphate: Arg-56 and Thr-57. Lys-84 contributes to the L-aspartate binding site. Residues Arg-106, His-136, and Gln-139 each coordinate carbamoyl phosphate. 2 residues coordinate L-aspartate: Arg-169 and Arg-221. Carbamoyl phosphate contacts are provided by Ala-262 and Pro-263.

It belongs to the aspartate/ornithine carbamoyltransferase superfamily. ATCase family. Heterododecamer (2C3:3R2) of six catalytic PyrB chains organized as two trimers (C3), and six regulatory PyrI chains organized as three dimers (R2).

It catalyses the reaction carbamoyl phosphate + L-aspartate = N-carbamoyl-L-aspartate + phosphate + H(+). The protein operates within pyrimidine metabolism; UMP biosynthesis via de novo pathway; (S)-dihydroorotate from bicarbonate: step 2/3. Functionally, catalyzes the condensation of carbamoyl phosphate and aspartate to form carbamoyl aspartate and inorganic phosphate, the committed step in the de novo pyrimidine nucleotide biosynthesis pathway. The polypeptide is Aspartate carbamoyltransferase catalytic subunit (Streptococcus sanguinis (strain SK36)).